The following is a 224-amino-acid chain: Peroxynitrite isomerase 2 (224 aa).

The short motif at 71-77 (GVWRGEG) is the GXWXGXG element. Heme b is bound by residues lysine 187 and histidine 214.

The protein belongs to the nitrobindin family. In terms of assembly, homodimer. Heme b is required as a cofactor.

The enzyme catalyses peroxynitrite = nitrate. Its pathway is nitrogen metabolism. In terms of biological role, heme-binding protein able to scavenge peroxynitrite and to protect free L-tyrosine against peroxynitrite-mediated nitration, by acting as a peroxynitrite isomerase that converts peroxynitrite to nitrate. Therefore, this protein likely plays a role in peroxynitrite sensing and in the detoxification of reactive nitrogen and oxygen species (RNS and ROS, respectively). Is able to bind nitric oxide (NO) in vitro, but may act as a sensor of peroxynitrite levels in vivo. The sequence is that of Peroxynitrite isomerase 2 from Mycobacterium sp. (strain JLS).